The sequence spans 447 residues: UDP-glycosyltransferase 76E3 (447 aa).

Residues Ser-269, 328–330 (APQ), 345–353 (HCGWNSTLE), and 367–370 (QGEQ) each bind UDP-alpha-D-glucose.

It belongs to the UDP-glycosyltransferase family.

This is UDP-glycosyltransferase 76E3 (UGT76E3) from Arabidopsis thaliana (Mouse-ear cress).